The primary structure comprises 404 residues: LL-diaminopimelate aminotransferase (404 aa).

Residues tyrosine 15 and glycine 42 each coordinate substrate. Pyridoxal 5'-phosphate contacts are provided by residues tyrosine 72, 108 to 109, tyrosine 132, asparagine 188, tyrosine 219, and 247 to 249; these read AK and SFS. Residues lysine 109, tyrosine 132, and asparagine 188 each coordinate substrate. Lysine 250 bears the N6-(pyridoxal phosphate)lysine mark. Pyridoxal 5'-phosphate is bound by residues arginine 258 and asparagine 288. Positions 288 and 384 each coordinate substrate.

This sequence belongs to the class-I pyridoxal-phosphate-dependent aminotransferase family. LL-diaminopimelate aminotransferase subfamily. As to quaternary structure, homodimer. Pyridoxal 5'-phosphate is required as a cofactor.

It carries out the reaction (2S,6S)-2,6-diaminopimelate + 2-oxoglutarate = (S)-2,3,4,5-tetrahydrodipicolinate + L-glutamate + H2O + H(+). Its pathway is amino-acid biosynthesis; L-lysine biosynthesis via DAP pathway; LL-2,6-diaminopimelate from (S)-tetrahydrodipicolinate (aminotransferase route): step 1/1. Its function is as follows. Involved in the synthesis of meso-diaminopimelate (m-DAP or DL-DAP), required for both lysine and peptidoglycan biosynthesis. Catalyzes the direct conversion of tetrahydrodipicolinate to LL-diaminopimelate. This is LL-diaminopimelate aminotransferase from Lachnospira eligens (strain ATCC 27750 / DSM 3376 / VPI C15-48 / C15-B4) (Eubacterium eligens).